Reading from the N-terminus, the 105-residue chain is Late embryogenesis abundant protein Lea5-A (105 aa).

The protein belongs to the LEA type 3 family.

This chain is Late embryogenesis abundant protein Lea5-A (LEA5-A), found in Gossypium hirsutum (Upland cotton).